A 223-amino-acid polypeptide reads, in one-letter code: Ribose-5-phosphate isomerase A (223 aa).

Residues 28 to 31 (TGST), 81 to 84 (DGAD), and 94 to 97 (KGGG) each bind substrate. Catalysis depends on E103, which acts as the Proton acceptor. K121 lines the substrate pocket.

Belongs to the ribose 5-phosphate isomerase family. In terms of assembly, homodimer.

The enzyme catalyses aldehydo-D-ribose 5-phosphate = D-ribulose 5-phosphate. Its pathway is carbohydrate degradation; pentose phosphate pathway; D-ribose 5-phosphate from D-ribulose 5-phosphate (non-oxidative stage): step 1/1. Functionally, catalyzes the reversible conversion of ribose-5-phosphate to ribulose 5-phosphate. This is Ribose-5-phosphate isomerase A from Janthinobacterium sp. (strain Marseille) (Minibacterium massiliensis).